A 311-amino-acid chain; its full sequence is Small ribosomal subunit protein uS3 (311 aa).

Residues M17–K86 form the KH type-2 domain. Positions P190–L267 are disordered. Residues T194–E204 show a composition bias toward low complexity. Residues P205 to A231 show a composition bias toward basic and acidic residues. Over residues K232–A247 the composition is skewed to low complexity. Residues E248–L267 show a composition bias toward acidic residues.

Belongs to the universal ribosomal protein uS3 family. As to quaternary structure, part of the 30S ribosomal subunit.

Its function is as follows. Binds the lower part of the 30S subunit head. The protein is Small ribosomal subunit protein uS3 of Methanosarcina barkeri (strain Fusaro / DSM 804).